Here is a 735-residue protein sequence, read N- to C-terminus: Disintegrin and metalloproteinase domain-containing protein 2 (735 aa).

A signal peptide spans 1–15 (MLCLLLLLCGLASLG). Positions 16-176 (GPLKKYVENS…KIKSIKSSVR (161 aa)) are excised as a propeptide. Residues 16–680 (GPLKKYVENS…EGAYHTKSRK (665 aa)) lie on the Extracellular side of the membrane. Residues Asn-55, Asn-220, and Asn-288 are each glycosylated (N-linked (GlcNAc...) asparagine). Residues 178-375 (HYIEMHIIVE…QVSQCLQNQP (198 aa)) form the Peptidase M12B domain. 4 cysteine pairs are disulfide-bonded: Cys-287–Cys-370, Cys-329–Cys-354, Cys-331–Cys-336, and Cys-442–Cys-455. A glycan (N-linked (GlcNAc...) asparagine) is linked at Asn-353. The Disintegrin domain maps to 384-470 (NPVCGNNRVE…ACQEDLYVIN (87 aa)). Asn-456 and Asn-564 each carry an N-linked (GlcNAc...) asparagine glycan. Positions 610 to 643 (LGYDCTPATCSDHGVCNNKRHCHCNPTYVPPNCE) constitute an EGF-like domain. 3 cysteine pairs are disulfide-bonded: Cys-614–Cys-625, Cys-619–Cys-631, and Cys-633–Cys-642. Residues 681–701 (WPFFLIIPFFVIFSVLVATVV) traverse the membrane as a helical segment. Residues 702-735 (KVYYQKKKWKTEDYANDENIESESEPKSSKVSSK) are Cytoplasmic-facing. Residues 716-735 (ANDENIESESEPKSSKVSSK) form a disordered region. Position 723 is a phosphoserine (Ser-723).

Heterodimer with ADAM1/fertilin subunit alpha. Post-translationally, the signal and the metalloprotease domain are cleaved during the epididymal maturation of the spermatozoa. Expressed specifically in testis.

The protein localises to the membrane. Functionally, sperm surface membrane protein that may be involved in sperm-egg plasma membrane adhesion and fusion during fertilization. Could have a direct role in sperm-zona binding or migration of sperm from the uterus into the oviduct. Interactions with egg membrane could be mediated via binding between its disintegrin-like domain to one or more integrins receptors on the egg. This is a non catalytic metalloprotease-like protein. In Cavia porcellus (Guinea pig), this protein is Disintegrin and metalloproteinase domain-containing protein 2 (ADAM2).